A 313-amino-acid chain; its full sequence is Methionyl-tRNA formyltransferase (313 aa).

113 to 116 (SLLP) provides a ligand contact to (6S)-5,6,7,8-tetrahydrofolate.

Belongs to the Fmt family.

The enzyme catalyses L-methionyl-tRNA(fMet) + (6R)-10-formyltetrahydrofolate = N-formyl-L-methionyl-tRNA(fMet) + (6S)-5,6,7,8-tetrahydrofolate + H(+). Its function is as follows. Attaches a formyl group to the free amino group of methionyl-tRNA(fMet). The formyl group appears to play a dual role in the initiator identity of N-formylmethionyl-tRNA by promoting its recognition by IF2 and preventing the misappropriation of this tRNA by the elongation apparatus. The protein is Methionyl-tRNA formyltransferase of Francisella tularensis subsp. novicida (strain U112).